The sequence spans 319 residues: Lambda-crystallin homolog (319 aa).

Ala2 is subject to N-acetylalanine. Position 3 is a phosphoserine (Ser3). NAD(+) is bound by residues 16–17 (LI), Asp36, Glu97, and Lys102.

This sequence belongs to the 3-hydroxyacyl-CoA dehydrogenase family. Homodimer.

The protein localises to the cytoplasm. The enzyme catalyses L-gulonate + NAD(+) = 3-dehydro-L-gulonate + NADH + H(+). Inhibited by malonate. Its function is as follows. Has high L-gulonate 3-dehydrogenase activity. It also exhibits low dehydrogenase activity toward L-3-hydroxybutyrate (HBA) and L-threonate. The chain is Lambda-crystallin homolog (Cryl1) from Rattus norvegicus (Rat).